The following is a 131-amino-acid chain: Secreted RxLR effector protein 45 (131 aa).

An N-terminal signal peptide occupies residues 1-16 (MSIFIFISLVLGLAHQ). A RxLR motif is present at residues 56 to 59 (RPLR). N-linked (GlcNAc...) asparagine glycosylation is present at Asn-128.

The protein belongs to the RxLR effector family.

It is found in the secreted. Its subcellular location is the host nucleus. Secreted effector that completely suppresses the host cell death induced by cell death-inducing proteins. In Plasmopara viticola (Downy mildew of grapevine), this protein is Secreted RxLR effector protein 45.